A 473-amino-acid chain; its full sequence is UTP--glucose-1-phosphate uridylyltransferase (473 aa).

Residues 89–92 (LNGG), Lys103, Gln166, and Gly195 contribute to the UTP site. 91–92 (GG) contributes to the substrate binding site. Substrate is bound by residues His196 and 224-226 (NSD). Positions 226 and 364 each coordinate UTP.

It belongs to the UDPGP type 1 family.

It is found in the cytoplasm. It carries out the reaction alpha-D-glucose 1-phosphate + UTP + H(+) = UDP-alpha-D-glucose + diphosphate. Plays a central role as a glucosyl donor in cellular metabolic pathways. The polypeptide is UTP--glucose-1-phosphate uridylyltransferase (Hordeum vulgare (Barley)).